A 131-amino-acid chain; its full sequence is Phosphoribosyl-AMP cyclohydrolase (131 aa).

Residue D80 participates in Mg(2+) binding. Zn(2+) is bound at residue C81. Mg(2+) contacts are provided by D82 and D84. The Zn(2+) site is built by C98 and C105.

The protein belongs to the PRA-CH family. In terms of assembly, homodimer. Requires Mg(2+) as cofactor. It depends on Zn(2+) as a cofactor.

Its subcellular location is the cytoplasm. The catalysed reaction is 1-(5-phospho-beta-D-ribosyl)-5'-AMP + H2O = 1-(5-phospho-beta-D-ribosyl)-5-[(5-phospho-beta-D-ribosylamino)methylideneamino]imidazole-4-carboxamide. It functions in the pathway amino-acid biosynthesis; L-histidine biosynthesis; L-histidine from 5-phospho-alpha-D-ribose 1-diphosphate: step 3/9. Functionally, catalyzes the hydrolysis of the adenine ring of phosphoribosyl-AMP. The sequence is that of Phosphoribosyl-AMP cyclohydrolase from Azoarcus sp. (strain BH72).